A 234-amino-acid chain; its full sequence is Sugar fermentation stimulation protein homolog (234 aa).

It belongs to the SfsA family.

The protein is Sugar fermentation stimulation protein homolog of Pectobacterium carotovorum subsp. carotovorum (strain PC1).